The following is a 456-amino-acid chain: F-box/FBD/LRR-repeat protein At3g52680 (456 aa).

Residues 20 to 73 (KDRISELPDGLLLKILSSLPTNIVVATSVLSKQWRSLWKLVPNLEFDSDDYESE) form the F-box domain. 7 LRR repeats span residues 74–100 (HYTFSEIVCKSFLSHKAPVLESFRLKF), 102–127 (NFNPVDIGLWVGIAFSRHLRELVLDF), 152–179 (TLKLVLCILVDIPSPVLMKSLRTLHLEF), 180–205 (VRYKDESSVRNLLSGCPGLEELRLYR), 225–252 (TIHDNNDGPEFWGYVINAPFLKYLLIEE), 270–295 (IAEVTSITIEKFLGSFTSVSRLLLNL), and 318–344 (TREAEWWNLLTLMLENSPKLQVLKLTD). The 52-residue stretch at 358–409 (KWNEPKDVPECLLSQLETFVWRRFDWGREEEKEIATYILKNGRRLKKATFST) folds into the FBD domain.

The protein is F-box/FBD/LRR-repeat protein At3g52680 of Arabidopsis thaliana (Mouse-ear cress).